The following is a 198-amino-acid chain: Recombination protein RecR (198 aa).

A C4-type zinc finger spans residues 57–72 (CSVCGRLTDDDPCIIC). Residues 80–175 (TKILVVEDSK…KVTRLARGLA (96 aa)) form the Toprim domain.

This sequence belongs to the RecR family.

Its function is as follows. May play a role in DNA repair. It seems to be involved in an RecBC-independent recombinational process of DNA repair. It may act with RecF and RecO. This is Recombination protein RecR from Streptococcus thermophilus (strain CNRZ 1066).